Here is a 196-residue protein sequence, read N- to C-terminus: Nucleoside triphosphate pyrophosphatase (196 aa).

Aspartate 72 functions as the Proton acceptor in the catalytic mechanism.

The protein belongs to the Maf family. A divalent metal cation serves as cofactor.

The protein localises to the cytoplasm. It carries out the reaction a ribonucleoside 5'-triphosphate + H2O = a ribonucleoside 5'-phosphate + diphosphate + H(+). It catalyses the reaction a 2'-deoxyribonucleoside 5'-triphosphate + H2O = a 2'-deoxyribonucleoside 5'-phosphate + diphosphate + H(+). Its function is as follows. Nucleoside triphosphate pyrophosphatase. May have a dual role in cell division arrest and in preventing the incorporation of modified nucleotides into cellular nucleic acids. This Chlamydia muridarum (strain MoPn / Nigg) protein is Nucleoside triphosphate pyrophosphatase.